We begin with the raw amino-acid sequence, 125 residues long: Ribosome-binding factor A (125 aa).

The protein belongs to the RbfA family. In terms of assembly, monomer. Binds 30S ribosomal subunits, but not 50S ribosomal subunits or 70S ribosomes.

Its subcellular location is the cytoplasm. Its function is as follows. One of several proteins that assist in the late maturation steps of the functional core of the 30S ribosomal subunit. Associates with free 30S ribosomal subunits (but not with 30S subunits that are part of 70S ribosomes or polysomes). Required for efficient processing of 16S rRNA. May interact with the 5'-terminal helix region of 16S rRNA. In Acidovorax sp. (strain JS42), this protein is Ribosome-binding factor A.